Consider the following 311-residue polypeptide: Delta(1)-pyrroline-2-carboxylate/Delta(1)-piperideine-2-carboxylate reductase (311 aa).

This sequence belongs to the ornithine cyclodeaminase/mu-crystallin family. As to quaternary structure, homodimer.

The catalysed reaction is L-pipecolate + NAD(+) = Delta(1)-piperideine-2-carboxylate + NADH + H(+). The enzyme catalyses L-pipecolate + NADP(+) = Delta(1)-piperideine-2-carboxylate + NADPH + H(+). It carries out the reaction L-proline + NAD(+) = 1-pyrroline-2-carboxylate + NADH + H(+). It catalyses the reaction L-proline + NADP(+) = 1-pyrroline-2-carboxylate + NADPH + H(+). It functions in the pathway amino-acid degradation. Functionally, catalyzes the reduction of both Delta(1)-pyrroline-2-carboxylate (Pyr2C) and Delta(1)-piperideine-2-carboxylate (Pip2C) to L-proline and L-pipecolate, respectively, using NADPH or NADH as the electron donor. Can also catalyze the reverse oxidation reactions, albeit at a much lower rate. Together with LhpH, is involved in a trans-3-hydroxy-L-proline (t3LHyp) degradation pathway to L-proline, which allows A.brasilense to grow on t3LHyp as a sole carbon source. Also appears to be involved in D-proline and D-lysine metabolism. Does not show ornithine cyclodeaminase (OCD) activity. The polypeptide is Delta(1)-pyrroline-2-carboxylate/Delta(1)-piperideine-2-carboxylate reductase (Azospirillum brasilense).